Reading from the N-terminus, the 150-residue chain is UPF0756 membrane protein plu2726 (150 aa).

4 consecutive transmembrane segments (helical) span residues 8 to 28, 51 to 71, 88 to 108, and 123 to 143; these read LLVL…TVTL, YGLT…IASG, LLAI…VSLM, and VLGV…AGIL.

Belongs to the UPF0756 family.

The protein localises to the cell membrane. This Photorhabdus laumondii subsp. laumondii (strain DSM 15139 / CIP 105565 / TT01) (Photorhabdus luminescens subsp. laumondii) protein is UPF0756 membrane protein plu2726.